We begin with the raw amino-acid sequence, 150 residues long: Cilia- and flagella-associated protein 68 (150 aa).

Mn stretches follow at residues 99-110 (TTYDTSYNNKMP) and 140-150 (KSTYMNSYSKP).

This sequence belongs to the CFAP68 family. In terms of assembly, microtubule inner protein component of sperm flagellar doublet microtubules.

It is found in the cytoplasm. The protein resides in the cytoskeleton. Its subcellular location is the cilium axoneme. It localises to the flagellum axoneme. The protein localises to the nucleus. It is found in the cell projection. The protein resides in the cilium. In terms of biological role, microtubule inner protein (MIP) part of the dynein-decorated doublet microtubules (DMTs) in cilia axoneme, which is required for motile cilia beating. The polypeptide is Cilia- and flagella-associated protein 68 (Homo sapiens (Human)).